We begin with the raw amino-acid sequence, 662 residues long: UvrABC system protein B (662 aa).

Residues 31-188 form the Helicase ATP-binding domain; that stretch reads DNIEGGEKAQ…NDLVDIQFER (158 aa). 44–51 is an ATP binding site; sequence GATGTGKT. Positions 97–120 match the Beta-hairpin motif; sequence YYDYYQPEAYVPSSDTYIEKDSSV. The Helicase C-terminal domain occupies 435-601; sequence QIDDLLGEIN…TIKKEIRDLI (167 aa). One can recognise a UVR domain in the interval 626–661; that stretch reads KELVKKLEKQMQEAVEVLDFELAAQIRDMMLEVKAL.

The protein belongs to the UvrB family. In terms of assembly, forms a heterotetramer with UvrA during the search for lesions. Interacts with UvrC in an incision complex.

It localises to the cytoplasm. The UvrABC repair system catalyzes the recognition and processing of DNA lesions. A damage recognition complex composed of 2 UvrA and 2 UvrB subunits scans DNA for abnormalities. Upon binding of the UvrA(2)B(2) complex to a putative damaged site, the DNA wraps around one UvrB monomer. DNA wrap is dependent on ATP binding by UvrB and probably causes local melting of the DNA helix, facilitating insertion of UvrB beta-hairpin between the DNA strands. Then UvrB probes one DNA strand for the presence of a lesion. If a lesion is found the UvrA subunits dissociate and the UvrB-DNA preincision complex is formed. This complex is subsequently bound by UvrC and the second UvrB is released. If no lesion is found, the DNA wraps around the other UvrB subunit that will check the other stand for damage. In Streptococcus pneumoniae (strain Taiwan19F-14), this protein is UvrABC system protein B.